The following is a 355-amino-acid chain: DNA-directed RNA polymerase subunit alpha (355 aa).

An alpha N-terminal domain (alpha-NTD) region spans residues 1 to 233 (MVREKVRVST…DLFIPFLHKE (233 aa)). Residues 268–355 (KKKIALKSIF…EIYCYSIFFH (88 aa)) are alpha C-terminal domain (alpha-CTD).

It belongs to the RNA polymerase alpha chain family. In terms of assembly, in plastids the minimal PEP RNA polymerase catalytic core is composed of four subunits: alpha, beta, beta', and beta''. When a (nuclear-encoded) sigma factor is associated with the core the holoenzyme is formed, which can initiate transcription.

The protein resides in the plastid. It is found in the chloroplast. The catalysed reaction is RNA(n) + a ribonucleoside 5'-triphosphate = RNA(n+1) + diphosphate. In terms of biological role, DNA-dependent RNA polymerase catalyzes the transcription of DNA into RNA using the four ribonucleoside triphosphates as substrates. The chain is DNA-directed RNA polymerase subunit alpha from Jasminum nudiflorum (Winter jasmine).